Reading from the N-terminus, the 367-residue chain is Peptide chain release factor 2 (367 aa).

Gln-249 bears the N5-methylglutamine mark.

Belongs to the prokaryotic/mitochondrial release factor family. In terms of processing, methylated by PrmC. Methylation increases the termination efficiency of RF2.

The protein resides in the cytoplasm. Its function is as follows. Peptide chain release factor 2 directs the termination of translation in response to the peptide chain termination codons UGA and UAA. The chain is Peptide chain release factor 2 from Thermotoga petrophila (strain ATCC BAA-488 / DSM 13995 / JCM 10881 / RKU-1).